The primary structure comprises 121 residues: Small ribosomal subunit protein uS13 (121 aa).

A disordered region spans residues 91-121; it reads HRMSLPVRGQRTRTNARTRRGSRKTVAGRKK. A compositionally biased stretch (basic residues) spans 100 to 121; it reads QRTRTNARTRRGSRKTVAGRKK.

This sequence belongs to the universal ribosomal protein uS13 family. Part of the 30S ribosomal subunit. Forms a loose heterodimer with protein S19. Forms two bridges to the 50S subunit in the 70S ribosome.

In terms of biological role, located at the top of the head of the 30S subunit, it contacts several helices of the 16S rRNA. In the 70S ribosome it contacts the 23S rRNA (bridge B1a) and protein L5 of the 50S subunit (bridge B1b), connecting the 2 subunits; these bridges are implicated in subunit movement. Contacts the tRNAs in the A and P-sites. The chain is Small ribosomal subunit protein uS13 from Prochlorococcus marinus (strain MIT 9515).